Consider the following 219-residue polypeptide: Membrin-12 (219 aa).

An N-acetylalanine modification is found at alanine 2. The Cytoplasmic segment spans residues 2–197 (ASGTVGGLSE…LIERRNRVDT (196 aa)). Residues 198–215 (WIKYAGMIATLVILYLFI) form a helical; Anchor for type IV membrane protein membrane-spanning segment. Topologically, residues 216–219 (RWTR) are vesicular.

Belongs to the GOSR2 family.

Its subcellular location is the golgi apparatus membrane. Functionally, involved in transport of proteins from the cis/medial-Golgi to the trans-Golgi network. In Arabidopsis thaliana (Mouse-ear cress), this protein is Membrin-12 (MEMB12).